A 256-amino-acid chain; its full sequence is DNA repair protein RecO (256 aa).

The protein belongs to the RecO family.

Its function is as follows. Involved in DNA repair and RecF pathway recombination. This is DNA repair protein RecO from Bacillus pumilus (strain SAFR-032).